A 426-amino-acid polypeptide reads, in one-letter code: Putative acid phosphatase 1 (426 aa).

The N-terminal stretch at 1-18 is a signal peptide; sequence MRVLFYVSILVIIASVHT. The Extracellular portion of the chain corresponds to 19-388; the sequence is QLISVHVIFR…SEWVMTPLSW (370 aa). His29 serves as the catalytic Nucleophile. Residues Asn37 and Asn145 are each glycosylated (N-linked (GlcNAc...) asparagine). Residues Cys133 and Cys369 are joined by a disulfide bond. The active-site Proton donor is Asp276. A helical transmembrane segment spans residues 389 to 409; that stretch reads IIVAIAILLLIALILMTYFVI. Topologically, residues 410-426 are cytoplasmic; it reads RYKNRSIVNIKKLSLEN.

Belongs to the histidine acid phosphatase family.

It localises to the membrane. It catalyses the reaction a phosphate monoester + H2O = an alcohol + phosphate. The chain is Putative acid phosphatase 1 from Caenorhabditis elegans.